A 933-amino-acid chain; its full sequence is Phosphoenolpyruvate carboxylase (933 aa).

Residues His-158 and Lys-592 contribute to the active site.

It belongs to the PEPCase type 1 family. Mg(2+) serves as cofactor.

It catalyses the reaction oxaloacetate + phosphate = phosphoenolpyruvate + hydrogencarbonate. Forms oxaloacetate, a four-carbon dicarboxylic acid source for the tricarboxylic acid cycle. This chain is Phosphoenolpyruvate carboxylase, found in Nitrosomonas europaea (strain ATCC 19718 / CIP 103999 / KCTC 2705 / NBRC 14298).